Reading from the N-terminus, the 539-residue chain is Tetracenomycin B2 monooxygenase-dioxygenase (539 aa).

FAD-binding residues include Leu15, Glu35, Gln128, and Leu152. Tyr231 acts as the Proton acceptor in catalysis. Asp313 lines the FAD pocket.

The protein belongs to the PheA/TfdB FAD monooxygenase family. It depends on FAD as a cofactor.

The catalysed reaction is tetracenomycin B2 + 2 NADPH + 2 O2 + 2 H(+) = 8-demethyltetracenomycin C + 2 NADP(+) + H2O. It catalyses the reaction tetracenomycin A2 + 2 NADPH + 2 O2 + 2 H(+) = tetracenomycin C + 2 NADP(+) + H2O. Its pathway is antibiotic biosynthesis. Its function is as follows. Involved in the biosynthesis of elloramycin, an antitumor polyketide. In vivo, probably catalyzes the triple hydroxylation of 8-demethyltetracenomycin A2 (tetracenomycin B2) at positions C-4, C-4a and C-12a to give 8-demethyltetracenomycin C (8-DMTC). In vitro, catalyzes the triple hydroxylation of tetracenomycin A2 (TCM A2) to give tetracenomycin C (TCM C). Uses NADPH as an electron donor and requires molecular O(2). This is Tetracenomycin B2 monooxygenase-dioxygenase from Streptomyces olivaceus.